Reading from the N-terminus, the 137-residue chain is Transcription antitermination protein NusB (137 aa).

Belongs to the NusB family.

Its function is as follows. Involved in transcription antitermination. Required for transcription of ribosomal RNA (rRNA) genes. Binds specifically to the boxA antiterminator sequence of the ribosomal RNA (rrn) operons. The polypeptide is Transcription antitermination protein NusB (Finegoldia magna (strain ATCC 29328 / DSM 20472 / WAL 2508) (Peptostreptococcus magnus)).